We begin with the raw amino-acid sequence, 34 residues long: MDSAISSPEIFIALVVAAHAAILALRLSVSLYRA.

A helical membrane pass occupies residues 5–25; the sequence is ISSPEIFIALVVAAHAAILAL.

Belongs to the PsaM family.

It is found in the cellular thylakoid membrane. In Synechococcus sp. (strain CC9902), this protein is Photosystem I reaction center subunit XII.